Reading from the N-terminus, the 105-residue chain is Co-chaperonin GroES 3 (105 aa).

The protein belongs to the GroES chaperonin family. Heptamer of 7 subunits arranged in a ring. Interacts with the chaperonin GroEL.

It is found in the cytoplasm. Functionally, together with the chaperonin GroEL, plays an essential role in assisting protein folding. The GroEL-GroES system forms a nano-cage that allows encapsulation of the non-native substrate proteins and provides a physical environment optimized to promote and accelerate protein folding. GroES binds to the apical surface of the GroEL ring, thereby capping the opening of the GroEL channel. This chain is Co-chaperonin GroES 3, found in Rhizobium meliloti (strain 1021) (Ensifer meliloti).